A 150-amino-acid chain; its full sequence is MKSKRHLKILNIIKNEDISTQEELVERLHESGIDVTQATVSRDIKRLGLIKVPDGKGGYKYSLPNEKTYGDIISWLKKMFQDFVIDMDFSENIIVVQTMPGTAEGLGSAIDNAEIEGVIGTVAGDDTIMIVTKPIEKTPEIFNKLQDLLI.

This sequence belongs to the ArgR family.

It is found in the cytoplasm. The protein operates within amino-acid biosynthesis; L-arginine biosynthesis [regulation]. Its function is as follows. Regulates arginine biosynthesis genes. This Halothermothrix orenii (strain H 168 / OCM 544 / DSM 9562) protein is Arginine repressor.